Here is a 255-residue protein sequence, read N- to C-terminus: Small ribosomal subunit protein uS2 (255 aa).

A disordered region spans residues 233 to 255 (DFVAEEAASEESLEELAEIVEGK).

The protein belongs to the universal ribosomal protein uS2 family.

This chain is Small ribosomal subunit protein uS2, found in Lactococcus lactis subsp. cremoris (strain SK11).